Here is a 313-residue protein sequence, read N- to C-terminus: Intracellular endo-alpha-(1-&gt;5)-L-arabinanase (313 aa).

The Proton acceptor role is filled by aspartate 27. Residues aspartate 27, glycine 105, 144 to 147, and 164 to 166 contribute to the substrate site; these read NAID and SFW. Residue glutamate 201 is the Proton donor of the active site. Histidine 271 serves as a coordination point for Ca(2+).

Belongs to the glycosyl hydrolase 43 family. As to quaternary structure, monomer. It depends on Ca(2+) as a cofactor.

It is found in the cytoplasm. The enzyme catalyses Endohydrolysis of (1-&gt;5)-alpha-arabinofuranosidic linkages in (1-&gt;5)-arabinans.. It functions in the pathway glycan metabolism; L-arabinan degradation. Its function is as follows. Involved in the degradation of arabinan and is a key enzyme in the complete degradation of the plant cell wall. Catalyzes the cleavage of endo alpha-(1-&gt;5)-L-arabinofuranosyl residues in debranched arabinan. This is Intracellular endo-alpha-(1-&gt;5)-L-arabinanase (abn-ts) from Geobacillus thermodenitrificans.